Consider the following 387-residue polypeptide: Exodeoxyribonuclease 7 large subunit (387 aa).

The protein belongs to the XseA family. As to quaternary structure, heterooligomer composed of large and small subunits.

The protein resides in the cytoplasm. The catalysed reaction is Exonucleolytic cleavage in either 5'- to 3'- or 3'- to 5'-direction to yield nucleoside 5'-phosphates.. Functionally, bidirectionally degrades single-stranded DNA into large acid-insoluble oligonucleotides, which are then degraded further into small acid-soluble oligonucleotides. The sequence is that of Exodeoxyribonuclease 7 large subunit from Campylobacter jejuni subsp. jejuni serotype O:23/36 (strain 81-176).